A 587-amino-acid polypeptide reads, in one-letter code: 5-aminolevulinate synthase, erythroid-specific, mitochondrial (587 aa).

The N-terminal 49 residues, 1–49 (MVTAAMLLQCCPVPARGPTSLLGKVVKTHQFLFGIGRCPILATQGPNCS), are a transit peptide targeting the mitochondrion. Arginine 163 is a binding site for succinyl-CoA. Residues cysteine 258 and phenylalanine 259 each coordinate pyridoxal 5'-phosphate. 2 residues coordinate succinyl-CoA: serine 280 and lysine 299. Residues serine 332, histidine 360, and threonine 388 each coordinate pyridoxal 5'-phosphate. The active site involves lysine 391. Lysine 391 bears the N6-(pyridoxal phosphate)lysine mark. Residues threonine 420 and threonine 421 each contribute to the pyridoxal 5'-phosphate site. Threonine 508 serves as a coordination point for succinyl-CoA.

This sequence belongs to the class-II pyridoxal-phosphate-dependent aminotransferase family. Homodimer. Interacts with SUCLA2. Pyridoxal 5'-phosphate is required as a cofactor.

It localises to the mitochondrion inner membrane. The catalysed reaction is succinyl-CoA + glycine + H(+) = 5-aminolevulinate + CO2 + CoA. The protein operates within porphyrin-containing compound metabolism; protoporphyrin-IX biosynthesis; 5-aminolevulinate from glycine: step 1/1. In terms of biological role, catalyzes the pyridoxal 5'-phosphate (PLP)-dependent condensation of succinyl-CoA and glycine to form aminolevulinic acid (ALA), with CoA and CO2 as by-products. Contributes significantly to heme formation during erythropoiesis. The polypeptide is 5-aminolevulinate synthase, erythroid-specific, mitochondrial (ALAS2) (Pongo abelii (Sumatran orangutan)).